Consider the following 194-residue polypeptide: Thymidine kinase (194 aa).

ATP contacts are provided by residues 15–22 (GSMFSGKS) and 88–91 (DEVQ). Glutamate 89 functions as the Proton acceptor in the catalytic mechanism. Zn(2+) contacts are provided by cysteine 145, cysteine 148, cysteine 183, and cysteine 186.

The protein belongs to the thymidine kinase family. As to quaternary structure, homotetramer.

It localises to the cytoplasm. The catalysed reaction is thymidine + ATP = dTMP + ADP + H(+). This Bacillus anthracis (strain A0248) protein is Thymidine kinase.